Consider the following 184-residue polypeptide: Inosine triphosphate pyrophosphatase (184 aa).

Residue 10-15 (TGNANK) participates in ITP binding. E38 contributes to the Mg(2+) binding site. ITP contacts are provided by residues K50, 66 to 67 (DT), K83, 142 to 145 (FGWD), K163, and 168 to 169 (HR).

It belongs to the HAM1 NTPase family. As to quaternary structure, homodimer. The cofactor is Mg(2+). Requires Mn(2+) as cofactor.

It localises to the cytoplasm. The protein resides in the nucleus. It catalyses the reaction ITP + H2O = IMP + diphosphate + H(+). It carries out the reaction dITP + H2O = dIMP + diphosphate + H(+). The catalysed reaction is XTP + H2O = XMP + diphosphate + H(+). In terms of biological role, pyrophosphatase that hydrolyzes non-canonical purine nucleotides such as inosine triphosphate (ITP), deoxyinosine triphosphate (dITP) or xanthosine 5'-triphosphate (XTP) to their respective monophosphate derivatives. The enzyme does not distinguish between the deoxy- and ribose forms. Probably excludes non-canonical purines from RNA and DNA precursor pools, thus preventing their incorporation into RNA and DNA and avoiding chromosomal lesions. This chain is Inosine triphosphate pyrophosphatase, found in Fusarium vanettenii (strain ATCC MYA-4622 / CBS 123669 / FGSC 9596 / NRRL 45880 / 77-13-4) (Fusarium solani subsp. pisi).